The chain runs to 777 residues: Endonuclease MutS2 (777 aa).

328-335 is an ATP binding site; that stretch reads GPNTGGKT. The Smr domain maps to 702 to 777; the sequence is LDIRGMNTLE…GDGATEVYLK (76 aa).

Belongs to the DNA mismatch repair MutS family. MutS2 subfamily. As to quaternary structure, homodimer. Binds to stalled ribosomes, contacting rRNA.

In terms of biological role, endonuclease that is involved in the suppression of homologous recombination and thus may have a key role in the control of bacterial genetic diversity. Acts as a ribosome collision sensor, splitting the ribosome into its 2 subunits. Detects stalled/collided 70S ribosomes which it binds and splits by an ATP-hydrolysis driven conformational change. Acts upstream of the ribosome quality control system (RQC), a ribosome-associated complex that mediates the extraction of incompletely synthesized nascent chains from stalled ribosomes and their subsequent degradation. Probably generates substrates for RQC. The polypeptide is Endonuclease MutS2 (Carboxydothermus hydrogenoformans (strain ATCC BAA-161 / DSM 6008 / Z-2901)).